The primary structure comprises 486 residues: E3 ubiquitin-protein ligase TRIM58 (486 aa).

The segment at 16 to 61 adopts an RING-type zinc-finger fold; the sequence is CPVCLDFLQEPVSVDCGHSFCLRCISEFCEKSDGAQGGVYACPQCR. The B box-type zinc-finger motif lies at 91 to 132; that stretch reads PGARRCARHGEDLSRFCEEDEAALCWVCDAGPEHRTHRTAPL. Zn(2+)-binding residues include cysteine 96, histidine 99, cysteine 118, and histidine 124. Residues 193-242 adopt a coiled-coil conformation; sequence LAQEEQRQLRRLEAEERATLQRLRESKSRLVQQSKALKELADELQERCQR. The B30.2/SPRY domain maps to 273 to 463; sequence LKTACCIPGR…TPLILPPTTI (191 aa).

Belongs to the TRIM/RBCC family. Expressed in erythroblasts.

It catalyses the reaction S-ubiquitinyl-[E2 ubiquitin-conjugating enzyme]-L-cysteine + [acceptor protein]-L-lysine = [E2 ubiquitin-conjugating enzyme]-L-cysteine + N(6)-ubiquitinyl-[acceptor protein]-L-lysine.. Its pathway is protein modification; protein ubiquitination. Its function is as follows. E3 ubiquitin ligase induced during late erythropoiesis. Directly binds and ubiquitinates the intermediate chain of the microtubule motor dynein (DYNC1LI1/DYNC1LI2), stimulating the degradation of the dynein holoprotein complex. May participate in the erythroblast enucleation process through regulation of nuclear polarization. The chain is E3 ubiquitin-protein ligase TRIM58 (TRIM58) from Homo sapiens (Human).